The primary structure comprises 65 residues: Large ribosomal subunit protein bL35 (65 aa).

Residues 1 to 47 (MPKIKTNRGAAKRFRKTASGKIKRNSAFTSHILTSKTRKRKRQLRSS) form a disordered region. Residues 10-24 (AAKRFRKTASGKIKR) are compositionally biased toward basic residues. The segment covering 26–35 (SAFTSHILTS) has biased composition (polar residues).

It belongs to the bacterial ribosomal protein bL35 family.

The polypeptide is Large ribosomal subunit protein bL35 (Geobacter metallireducens (strain ATCC 53774 / DSM 7210 / GS-15)).